Here is a 64-residue protein sequence, read N- to C-terminus: Large ribosomal subunit protein bL28 (64 aa).

Belongs to the bacterial ribosomal protein bL28 family.

This is Large ribosomal subunit protein bL28 from Bifidobacterium adolescentis (strain ATCC 15703 / DSM 20083 / NCTC 11814 / E194a).